The chain runs to 54 residues: Califin-B (54 aa).

A disulfide bridge links Cys25 with Cys53. Position 36 is a leucine amide (Leu36).

This sequence belongs to the molluscan ELH family. This protein consists of a large 36-residue subunit, bound by a single disulfide-bond to a small 18-residue subunit.

Its subcellular location is the secreted. Injected in sexually mature animals califin B excites LB and LC cells of the abdominal ganglion and cause egg-laying. This is Califin-B from Aplysia californica (California sea hare).